The primary structure comprises 1163 residues: DNA-directed RNA polymerase subunit beta 2 (1163 aa).

This sequence belongs to the RNA polymerase beta chain family. In terms of assembly, the RNAP catalytic core consists of 2 alpha, 1 beta, 1 beta' and 1 omega subunit. When a sigma factor is associated with the core the holoenzyme is formed, which can initiate transcription.

The enzyme catalyses RNA(n) + a ribonucleoside 5'-triphosphate = RNA(n+1) + diphosphate. Its function is as follows. DNA-dependent RNA polymerase catalyzes the transcription of DNA into RNA using the four ribonucleoside triphosphates as substrates. The sequence is that of DNA-directed RNA polymerase subunit beta 2 from Nocardia farcinica (strain IFM 10152).